We begin with the raw amino-acid sequence, 235 residues long: uncharacterized protein (235 aa).

Helical transmembrane passes span 41 to 61, 71 to 91, and 129 to 149; these read IFWH…IYRL, LRTF…IEFP, and IGII…TPTI.

It localises to the membrane. This is an uncharacterized protein from Schizosaccharomyces pombe (strain 972 / ATCC 24843) (Fission yeast).